Reading from the N-terminus, the 415-residue chain is NEDD8-specific protease 2 (415 aa).

Residues 1–42 (MRSNSIFTKEIDSEAVKKSSNLRPPSTGSSNSNGSDTASPKK) are disordered. Over residues 26-38 (STGSSNSNGSDTA) the composition is skewed to low complexity. Ser35 carries the post-translational modification Phosphoserine. Residues His171, Asp188, and Cys229 contribute to the active site. A disordered region spans residues 320 to 415 (AVTSDSAQPH…QHTQQSIEIH (96 aa)). 3 stretches are compositionally biased toward polar residues: residues 335-368 (MPSS…NSSP), 379-390 (TASTSVLPTSIL), and 405-415 (IQHTQQSIEIH). A Phosphoserine modification is found at Ser367.

This sequence belongs to the peptidase C48 family.

It localises to the cytoplasm. It is found in the nucleus. Protease that catalyzes two essential functions in the NEDD8 pathway: processing of full-length NEDD8 to its mature form and deconjugation of NEDD8 from targeted proteins such as the pcu1, pcu2 and pcu4 cullins and other proteins. Has a role in meiosis. The protein is NEDD8-specific protease 2 (nep2) of Schizosaccharomyces pombe (strain 972 / ATCC 24843) (Fission yeast).